Reading from the N-terminus, the 1332-residue chain is SAGA complex subunit SPT7 (1332 aa).

Phosphothreonine; by ATM or ATR is present on threonine 78. Disordered stretches follow at residues 80–118, 209–268, and 331–384; these read EEEHHGAVSPAVDTRSDDVSSQTIKDNNNTNTNTSISNE, VEEK…ISSS, and IEKG…PKQS. Serine 88 carries the post-translational modification Phosphoserine. Over residues 106 to 118 the composition is skewed to low complexity; the sequence is NNNTNTNTSISNE. Residues 217–233 are compositionally biased toward basic and acidic residues; that stretch reads IGKNEKPQNKEGISKFA. The span at 234 to 249 shows a compositional bias: acidic residues; it reads EDEDYDDEDENYDEDS. A compositionally biased stretch (basic and acidic residues) spans 250-260; it reads TDVKNVDDPPK. Acidic residues predominate over residues 345–360; sequence AATDEQDRENTNDEPD. Positions 362–376 are enriched in polar residues; that stretch reads NQKLPTPEGSTFSDT. In terms of domain architecture, Bromo spans 440 to 546; the sequence is IGQEELYEAC…KKSLQLIRMI (107 aa). Acidic residues predominate over residues 566-578; sequence KDKDYELDEEEEV. Disordered regions lie at residues 566–724 and 1286–1332; these read KDKD…YLLE and GAEN…RLNQ. Basic and acidic residues-rich tracts occupy residues 593-634 and 644-697; these read LAKE…KDKT and NVNK…KEAG. Positions 698–716 are enriched in acidic residues; that stretch reads ENNEEEEDDDDEDEDEDMV. Serine 1293 bears the Phosphoserine mark. The span at 1316 to 1332 shows a compositional bias: polar residues; that stretch reads NMGSNSSFSLSLPRLNQ.

In terms of assembly, component of the 1.8 MDa SAGA (Spt-Ada-Gcn5 acetyltransferase) complex, which is composed of 19 subunits TRA1, SPT7, TAF5, NGG1/ADA3, SGF73, SPT20/ADA5, SPT8, TAF12, TAF6, HFI1/ADA1, UBP8, GCN5, ADA2, SPT3, SGF29, TAF10, TAF9, SGF11 and SUS1. The SAGA complex is composed of 4 modules, namely the HAT (histone acetyltransferase) module (GCN5, ADA2, NGG1/ADA3 and SGF29), the DUB (deubiquitinating) module (UBP8, SGF11, SGF73 and SUS1), the core or TAF (TBP-associated factor) module (TAF5, TAF6, TAF9, TAF10 and TAF12), and the Tra1 or SPT (Suppressor of Ty) module (TRA1, HFI1/ADA1, SPT3, SPT7, SPT8 and SPT20/ADA5). The Tra1/SPT module binds activators, the core module recruits TBP (TATA-binding protein), the HAT module contains the histone H3 acetyltransferase GCN5, and the DUB module comprises the histone H2B deubiquitinase UBP8. Also identified in an altered form of SAGA, named SALSA (SAGA altered, Spt8 absent) or SLIK (SAGA-like) complex, which contains a C-terminal truncated form of SPT7 and is missing SPT8. However, it has been shown that the SAGA and SAGA-like SALSA/SLIK transcriptional coactivators are structurally and biochemically equivalent. Identified in the Ada.spt complex with NGG1/ADA3 and TRA1. Protease PEP4 directly cleaves the C-terminus of SPT7(SAGA) to form SPT7(SLIK) within the SAGA complex in the nucleus.

Its subcellular location is the nucleus. In terms of biological role, component of the transcription coactivator SAGA complex. SAGA acts as a general cofactor required for essentially all RNA polymerase II transcription. At the promoters, SAGA is required for transcription pre-initiation complex (PIC) recruitment. It influences RNA polymerase II transcriptional activity through different activities such as TBP interaction (via core/TAF module) and promoter selectivity, interaction with transcription activators (via Tra1/SPT module), and chromatin modification through histone acetylation (via HAT module) and deubiquitination (via DUB module). SAGA preferentially acetylates histones H3 (to form H3K9ac, H3K14ac, H3K18ac and H3K23ac) and H2B and deubiquitinates histone H2B. SAGA interacts with DNA via upstream activating sequences (UASs). Also identified in a modified version of SAGA named SALSA or SLIK. The cleavage of SPT7 and the absence of the SPT8 subunit in SLIK neither drive any major conformational differences in its structure compared with SAGA, nor significantly affect HAT, DUB, or DNA-binding activities. The protein is SAGA complex subunit SPT7 (SPT7) of Saccharomyces cerevisiae (strain ATCC 204508 / S288c) (Baker's yeast).